The following is a 398-amino-acid chain: tRNA-specific 2-thiouridylase MnmA (398 aa).

ATP is bound by residues 20–27 (AMSGGVDS) and Leu46. Catalysis depends on Cys114, which acts as the Nucleophile. Cys114 and Cys210 are oxidised to a cystine. Position 138 (Gly138) interacts with ATP. An interaction with tRNA region spans residues 160 to 162 (RDQ). Residue Cys210 is the Cysteine persulfide intermediate of the active site.

It belongs to the MnmA/TRMU family.

It is found in the cytoplasm. It carries out the reaction S-sulfanyl-L-cysteinyl-[protein] + uridine(34) in tRNA + AH2 + ATP = 2-thiouridine(34) in tRNA + L-cysteinyl-[protein] + A + AMP + diphosphate + H(+). Its function is as follows. Catalyzes the 2-thiolation of uridine at the wobble position (U34) of tRNA, leading to the formation of s(2)U34. This is tRNA-specific 2-thiouridylase MnmA from Brucella canis (strain ATCC 23365 / NCTC 10854 / RM-666).